The following is a 218-amino-acid chain: Octanoyltransferase (218 aa).

The BPL/LPL catalytic domain occupies 32 to 214 (VLTADEIWLV…HFTQLLGYND (183 aa)). Substrate-binding positions include 71-78 (RGGQITYH), 143-145 (SLG), and 156-158 (GLA). Cys-174 (acyl-thioester intermediate) is an active-site residue.

The protein belongs to the LipB family.

It is found in the cytoplasm. The catalysed reaction is octanoyl-[ACP] + L-lysyl-[protein] = N(6)-octanoyl-L-lysyl-[protein] + holo-[ACP] + H(+). The protein operates within protein modification; protein lipoylation via endogenous pathway; protein N(6)-(lipoyl)lysine from octanoyl-[acyl-carrier-protein]: step 1/2. Functionally, catalyzes the transfer of endogenously produced octanoic acid from octanoyl-acyl-carrier-protein onto the lipoyl domains of lipoate-dependent enzymes. Lipoyl-ACP can also act as a substrate although octanoyl-ACP is likely to be the physiological substrate. The sequence is that of Octanoyltransferase from Histophilus somni (strain 2336) (Haemophilus somnus).